We begin with the raw amino-acid sequence, 160 residues long: Cytochrome b6-f complex subunit 4 (160 aa).

Transmembrane regions (helical) follow at residues 36–56 (LLYM…GLAV), 95–115 (LLGV…PFIE), and 131–151 (TVFL…TLPI).

Belongs to the cytochrome b family. PetD subfamily. In terms of assembly, the 4 large subunits of the cytochrome b6-f complex are cytochrome b6, subunit IV (17 kDa polypeptide, petD), cytochrome f and the Rieske protein, while the 4 small subunits are petG, petL, petM and petN. The complex functions as a dimer.

The protein localises to the plastid. Its subcellular location is the chloroplast thylakoid membrane. Functionally, component of the cytochrome b6-f complex, which mediates electron transfer between photosystem II (PSII) and photosystem I (PSI), cyclic electron flow around PSI, and state transitions. The sequence is that of Cytochrome b6-f complex subunit 4 from Coleochaete orbicularis (Charophycean green alga).